The following is a 63-amino-acid chain: Chymotrypsin/elastase isoinhibitor 1 (63 aa).

5 disulfides stabilise this stretch: Cys5/Cys38, Cys14/Cys33, Cys17/Cys29, Cys21/Cys60, and Cys40/Cys54. The 56-residue stretch at 5 to 60 (CGPNEVWTECTGCEMKCGPDENTPCPLMCRRPSCECSPGRGMRRTNDGKCIPASQC) folds into the TIL domain.

This sequence belongs to the serine protease inhibitor-like (TIL domain-containing) family.

It localises to the secreted. Functionally, defends the organism against the host's proteinases. This Ascaris suum (Pig roundworm) protein is Chymotrypsin/elastase isoinhibitor 1.